The sequence spans 206 residues: MELNVTTLEGNAAGSVQLSDGIFGLEPRKDLIQRCVNWQLAKRQAGTHKTKGRAEIWRTGKKMFKQKGTGNARHGSARVPQFRGGGRAFGPVVRSHAHDLPKKVRALALRHALSAKAKDGGLIVIDSAELNEAKTKALVGHFSGLGLTNALIVDGAAVHAGFATAARNIPNIDVLPIQGINVYDILRRRKLVLTKAAVDALEARFK.

This sequence belongs to the universal ribosomal protein uL4 family. Part of the 50S ribosomal subunit.

In terms of biological role, one of the primary rRNA binding proteins, this protein initially binds near the 5'-end of the 23S rRNA. It is important during the early stages of 50S assembly. It makes multiple contacts with different domains of the 23S rRNA in the assembled 50S subunit and ribosome. Its function is as follows. Forms part of the polypeptide exit tunnel. The sequence is that of Large ribosomal subunit protein uL4 from Nitrobacter hamburgensis (strain DSM 10229 / NCIMB 13809 / X14).